Reading from the N-terminus, the 191-residue chain is uncharacterized protein (191 aa).

The HTH tetR-type domain occupies 6–66 (GLTQKMIVDA…ELAVRGLTKL (61 aa)). The H-T-H motif DNA-binding region spans 29-48 (SLAALSKKMNVRPPSLYNHI).

This is an uncharacterized protein from Bacillus subtilis (strain 168).